We begin with the raw amino-acid sequence, 369 residues long: Anhydro-N-acetylmuramic acid kinase (369 aa).

Position 12 to 19 (12 to 19 (GTSMDGVD)) interacts with ATP.

It belongs to the anhydro-N-acetylmuramic acid kinase family.

The enzyme catalyses 1,6-anhydro-N-acetyl-beta-muramate + ATP + H2O = N-acetyl-D-muramate 6-phosphate + ADP + H(+). The protein operates within amino-sugar metabolism; 1,6-anhydro-N-acetylmuramate degradation. Its pathway is cell wall biogenesis; peptidoglycan recycling. In terms of biological role, catalyzes the specific phosphorylation of 1,6-anhydro-N-acetylmuramic acid (anhMurNAc) with the simultaneous cleavage of the 1,6-anhydro ring, generating MurNAc-6-P. Is required for the utilization of anhMurNAc either imported from the medium or derived from its own cell wall murein, and thus plays a role in cell wall recycling. The sequence is that of Anhydro-N-acetylmuramic acid kinase from Shewanella baltica (strain OS185).